Here is a 291-residue protein sequence, read N- to C-terminus: MTFAFSKKIELKPILKFDTPKVYSYEIIQEIEALVQRLFLQVWRRPATLMAGIIQPLLWLVLFGGLFCNAPVNLFTINTSYNRFLSSGIIVFTSFTGALNSGLPLMFDREFGFLNRLLTAPLISRTSIIFSSATFMTCLSLIQVIFIVIASLFMGNSPLSSNSTLIFALIVLLVTVGVTMLSLALSFTLPGHIELLALILVVNLPFLFSSTALAPLYFMPPWLQLIASLNPLSYAIEGIRYIYSNTDWNFTESVIKISWGDISLGQIISLLLFLDVIGAYIVSNILKARLN.

6 helical membrane passes run 47-67, 87-107, 135-155, 165-185, 195-215, and 262-282; these read ATLM…GGLF, SGII…PLMF, FMTC…LFMG, LIFA…SLAL, LLAL…ALAP, and ISLG…AYIV. Residues 47–289 enclose the ABC transmembrane type-2 domain; it reads ATLMAGIIQP…YIVSNILKAR (243 aa).

Belongs to the ABC-2 integral membrane protein family.

It localises to the plastid. The protein localises to the chloroplast membrane. The sequence is that of Putative transport permease ycf38 (ycf38) from Porphyra purpurea (Red seaweed).